Here is a 524-residue protein sequence, read N- to C-terminus: GMP synthase [glutamine-hydrolyzing] (524 aa).

Residues 9-207 (RILILDFGSQ…VIHICQCIPN (199 aa)) form the Glutamine amidotransferase type-1 domain. Cysteine 86 acts as the Nucleophile in catalysis. Active-site residues include histidine 181 and glutamate 183. A GMPS ATP-PPase domain is found at 208–399 (WTTKHIIEDS…LGLPADLIYR (192 aa)). 235–241 (SGGVDSA) lines the ATP pocket.

In terms of assembly, homodimer.

It carries out the reaction XMP + L-glutamine + ATP + H2O = GMP + L-glutamate + AMP + diphosphate + 2 H(+). It functions in the pathway purine metabolism; GMP biosynthesis; GMP from XMP (L-Gln route): step 1/1. Functionally, catalyzes the synthesis of GMP from XMP. The polypeptide is GMP synthase [glutamine-hydrolyzing] (Coxiella burnetii (strain CbuG_Q212) (Coxiella burnetii (strain Q212))).